Reading from the N-terminus, the 854-residue chain is MKVMEKKKRDWNSLSIITIITIILLTPCLTSELWVTVYYGVPVWHDADPVLFCASDAKAHSTEAHNIWATQACVPTDPSPQEVFLPNVIESFNMWKNNMVDQMHEDIISLWDQSLKPCVKLTPLCVTLQCSKANFSQAKNLTNQTSSPPLEMKNCSFNVTTELRDKKKQVYSLFYVEDVVNLGNENNTYRIINCNTTAITQACPKTSFEPIPIHYCAPAGFAILKCNDKDFSGKGKCTNVSTVHCTHGIKPVVTTQLLINGSLAEGNITVRVENKSKNTDVWIVQLVEAVSLNCHRPGNNTRGEVQIGPGMTFYNIENVVGDTRSAYCKINGTTWNRTVEEVKKALATSSNRTAANITLNRASGGDPEVTHHMFNCGGEFFYCNTSQIFTDNITNGIIILPCRIRQIVSSWMRVGRGIYAPPIRGNITCNSNITGLLLTSDTPVTNNSGNLTFRPTGGNMKDIWRSELYKYKVVRIEPLSVAPTKARRHTVARQKDRQKRAAFGLGALFLGFLGAAGSTMGAAAVTLTVQARQLLSGIVQQQNNLLKAIEAQQHLLQLSIWGVKQLQARLLAVERYLQDQQILGLWGCSGKAVCYTTVPWNNSWPGSNSTDDIWGNLTWQQWDKLVSNYTGKIFGLLEEAQSQQEKNERDLLELDQWASLWNWFDITKWLWYIKIFLMAVGGIIGLRIIMTVFSVVRRVRQGYSPLSLQTLIPVQREQGRLGEIDEGGGEQDRSRSVRLVEGCLPLIWDDLRNLGIWSYQSLTSLACNVWRQLKTLGHLILHSLRLLRERLCLLGGIIQYWGKELKISAISLLDATAIAVAEGTDRIIEAFQVTLRIIRNIPRRIRQGLERALL.

Residues 1–31 (MKVMEKKKRDWNSLSIITIITIILLTPCLTS) form the signal peptide. The Extracellular segment spans residues 32–675 (ELWVTVYYGV…ITKWLWYIKI (644 aa)). Disulfide bonds link C53–C73, C118–C203, C125–C194, C130–C155, C216–C245, and C226–C237. Residues 130–154 (CSKANFSQAKNLTNQTSSPPLEMKN) are V1. N-linked (GlcNAc...) asparagine; by host glycosylation is found at N134, N140, N143, N154, N158, N186, and N195. The segment at 155–194 (CSFNVTTELRDKKKQVYSLFYVEDVVNLGNENNTYRIINC) is V2. 9 N-linked (GlcNAc...) asparagine; by host glycosylation sites follow: N239, N260, N267, N274, N299, N331, N336, N351, and N356. Residues 294–327 (CHRPGNNTRGEVQIGPGMTFYNIENVVGDTRSAY) are V3. Residues C294 and C328 are joined by a disulfide bond. The CD4-binding loop stretch occupies residues 362-372 (ASGGDPEVTHH). 2 disulfides stabilise this stretch: C376/C429 and C383/C402. Positions 383-402 (CNTSQIFTDNITNGIIILPC) are V4. Residues N384, N392, N426, N432, N446, and N450 are each glycosylated (N-linked (GlcNAc...) asparagine; by host). V5 regions lie at residues 445–456 (TNNSGNLTFRPT) and 447–456 (NSGNLTFRPT). The interval 501–522 (AAFGLGALFLGFLGAAGSTMGA) is fusion peptide. An immunosuppression region spans residues 564–582 (KQLQARLLAVERYLQDQQI). A disulfide bridge links C588 with C594. N-linked (GlcNAc...) asparagine; by host glycosylation is found at N601, N608, N616, and N628. The stretch at 624-658 (KLVSNYTGKIFGLLEEAQSQQEKNERDLLELDQWA) forms a coiled coil. Residues 653–674 (ELDQWASLWNWFDITKWLWYIK) are MPER; binding to GalCer. Residues 676–696 (FLMAVGGIIGLRIIMTVFSVV) traverse the membrane as a helical segment. The Cytoplasmic segment spans residues 697–854 (RRVRQGYSPL…IRQGLERALL (158 aa)). The YXXL motif; contains endocytosis signal signature appears at 703-706 (YSPL). Residues 853–854 (LL) carry the Di-leucine internalization motif motif.

Belongs to the HIV-1 env protein family. The mature envelope protein (Env) consists of a homotrimer of non-covalently associated gp120-gp41 heterodimers. The resulting complex protrudes from the virus surface as a spike. There seems to be as few as 10 spikes on the average virion. Interacts with host CD4, CCR5 and CXCR4. Gp120 also interacts with the C-type lectins CD209/DC-SIGN and CLEC4M/DC-SIGNR (collectively referred to as DC-SIGN(R)). Gp120 and gp41 interact with GalCer. Gp120 interacts with host ITGA4/ITGB7 complex; on CD4+ T-cells, this interaction results in rapid activation of integrin ITGAL/LFA-1, which facilitates efficient cell-to-cell spreading of HIV-1. Gp120 interacts with cell-associated heparan sulfate; this interaction increases virus infectivity on permissive cells and may be involved in infection of CD4- cells. In terms of assembly, the mature envelope protein (Env) consists of a homotrimer of non-covalently associated gp120-gp41 heterodimers. The resulting complex protrudes from the virus surface as a spike. There seems to be as few as 10 spikes on the average virion. Highly glycosylated by host. The high number of glycan on the protein is reffered to as 'glycan shield' because it contributes to hide protein sequence from adaptive immune system. In terms of processing, palmitoylation of the transmembrane protein and of Env polyprotein (prior to its proteolytic cleavage) is essential for their association with host cell membrane lipid rafts. Palmitoylation is therefore required for envelope trafficking to classical lipid rafts, but not for viral replication. Post-translationally, specific enzymatic cleavages in vivo yield mature proteins. Envelope glycoproteins are synthesized as an inactive precursor that is heavily N-glycosylated and processed likely by host cell furin in the Golgi to yield the mature SU and TM proteins. The cleavage site between SU and TM requires the minimal sequence [KR]-X-[KR]-R. About 2 of the 9 disulfide bonds of gp41 are reduced by P4HB/PDI, following binding to CD4 receptor.

Its subcellular location is the virion membrane. It is found in the host cell membrane. The protein localises to the host endosome membrane. Functionally, attaches the virus to the host lymphoid cell by binding to the primary receptor CD4. This interaction induces a structural rearrangement creating a high affinity binding site for a chemokine coreceptor like CXCR4 and/or CCR5. Acts as a ligand for CD209/DC-SIGN and CLEC4M/DC-SIGNR, which are respectively found on dendritic cells (DCs), and on endothelial cells of liver sinusoids and lymph node sinuses. These interactions allow capture of viral particles at mucosal surfaces by these cells and subsequent transmission to permissive cells. HIV subverts the migration properties of dendritic cells to gain access to CD4+ T-cells in lymph nodes. Virus transmission to permissive T-cells occurs either in trans (without DCs infection, through viral capture and transmission), or in cis (following DCs productive infection, through the usual CD4-gp120 interaction), thereby inducing a robust infection. In trans infection, bound virions remain infectious over days and it is proposed that they are not degraded, but protected in non-lysosomal acidic organelles within the DCs close to the cell membrane thus contributing to the viral infectious potential during DCs' migration from the periphery to the lymphoid tissues. On arrival at lymphoid tissues, intact virions recycle back to DCs' cell surface allowing virus transmission to CD4+ T-cells. Acts as a class I viral fusion protein. Under the current model, the protein has at least 3 conformational states: pre-fusion native state, pre-hairpin intermediate state, and post-fusion hairpin state. During fusion of viral and target intracellular membranes, the coiled coil regions (heptad repeats) assume a trimer-of-hairpins structure, positioning the fusion peptide in close proximity to the C-terminal region of the ectodomain. The formation of this structure appears to drive apposition and subsequent fusion of viral and target cell membranes. Complete fusion occurs in host cell endosomes and is dynamin-dependent, however some lipid transfer might occur at the plasma membrane. The virus undergoes clathrin-dependent internalization long before endosomal fusion, thus minimizing the surface exposure of conserved viral epitopes during fusion and reducing the efficacy of inhibitors targeting these epitopes. Membranes fusion leads to delivery of the nucleocapsid into the cytoplasm. In terms of biological role, oligomerizes in the host endoplasmic reticulum into predominantly trimers. In a second time, gp160 transits in the host Golgi, where glycosylation is completed. The precursor is then proteolytically cleaved in the trans-Golgi and thereby activated by cellular furin or furin-like proteases to produce gp120 and gp41. The sequence is that of Envelope glycoprotein gp160 from Pan (chimpanzees).